The primary structure comprises 669 residues: MSDAQQITLIVDGEETKVTEGTTGAELFFERRDVVVARVNGVLKDLDQVLTEGADVEGVTIDSPDGLNVLRHSTAHVMAQAVQQLRPEAKLGIGPYITDGFYFDFDVADPFTPEDLRTLEKMMQKIINQNQKFVRRVVTEEEAREAMANEPYKLELLGKKNDASDAAEGVNVEVGAGDITIYDNVDRKSGESIWCDLCRGPHLQNTKIISNAFALTRSSAAYWLGNQNNQQLQRIYGTAWPTKEALKAYQERIAEAERRDHRKLGVELDLFSFPDELGSGLPVFHPKGGIIRKAMEDYSRQRHVDAGYEFVYTPHITKGHLYEVSGHLDWYKDGMFPAMQVDAEFNEDGSVRKPAQDYYLKPMNCPMHNLIFRSRGRSYRELPLRLFEFGSVYRYEKSGVVHGLTRVRGMTQDDAHIYCTREQMKDELTTTLNFVLGLLKDYGLDDFYLELSTKNEEKFVGDDAAWEEATRTLSEVAEASGLHLVPDPGGAAFYGPKISVQAKDALGRTWQMSTIQLDFNLPERFELEYQAADGTRQRPVMIHRALFGSVERFMGVLTEHYAGAFPAWLAPVQVVGIPVAETFNDYMFDVVGQLKAAGIRAEVDISSDRFPKKIRTASKDKIPFVLIAGGEDAEAGAVSFRFRDGSQDNGVPVAEAVRRIVDAVKNRES.

Positions 3-60 (DAQQITLIVDGEETKVTEGTTGAELFFERRDVVVARVNGVLKDLDQVLTEGADVEGVT) constitute a TGS domain. The catalytic stretch occupies residues 260–566 (DHRKLGVELD…LTEHYAGAFP (307 aa)). Zn(2+)-binding residues include Cys365, His416, and His543.

It belongs to the class-II aminoacyl-tRNA synthetase family. As to quaternary structure, homodimer. Zn(2+) is required as a cofactor.

Its subcellular location is the cytoplasm. It carries out the reaction tRNA(Thr) + L-threonine + ATP = L-threonyl-tRNA(Thr) + AMP + diphosphate + H(+). Functionally, catalyzes the attachment of threonine to tRNA(Thr) in a two-step reaction: L-threonine is first activated by ATP to form Thr-AMP and then transferred to the acceptor end of tRNA(Thr). Also edits incorrectly charged L-seryl-tRNA(Thr). The protein is Threonine--tRNA ligase of Paenarthrobacter aurescens (strain TC1).